A 100-amino-acid chain; its full sequence is Large ribosomal subunit protein uL23 (100 aa).

Belongs to the universal ribosomal protein uL23 family. As to quaternary structure, part of the 50S ribosomal subunit. Contacts protein L29, and trigger factor when it is bound to the ribosome.

In terms of biological role, one of the early assembly proteins it binds 23S rRNA. One of the proteins that surrounds the polypeptide exit tunnel on the outside of the ribosome. Forms the main docking site for trigger factor binding to the ribosome. The polypeptide is Large ribosomal subunit protein uL23 (Proteus mirabilis (strain HI4320)).